Consider the following 523-residue polypeptide: Glycine betaine transporter 1 (523 aa).

Transmembrane regions (helical) follow at residues Val33–Ala53, Phe71–Val91, Ser109–Trp129, Phe165–Phe185, Ile214–Gly234, Gly251–Val271, Met286–Gly306, Trp337–Ala357, Val372–Ile392, Val420–Ile440, Val467–Glu487, and Ala496–Met516.

Belongs to the BCCT transporter (TC 2.A.15) family.

It localises to the cell inner membrane. Involved in the uptake of the osmoprotectant glycine betaine. This chain is Glycine betaine transporter 1, found in Vibrio parahaemolyticus serotype O3:K6 (strain RIMD 2210633).